We begin with the raw amino-acid sequence, 101 residues long: Urease subunit beta (101 aa).

The protein belongs to the urease beta subunit family. In terms of assembly, heterotrimer of UreA (gamma), UreB (beta) and UreC (alpha) subunits. Three heterotrimers associate to form the active enzyme.

The protein localises to the cytoplasm. It catalyses the reaction urea + 2 H2O + H(+) = hydrogencarbonate + 2 NH4(+). The protein operates within nitrogen metabolism; urea degradation; CO(2) and NH(3) from urea (urease route): step 1/1. In Burkholderia ambifaria (strain MC40-6), this protein is Urease subunit beta.